Reading from the N-terminus, the 236-residue chain is Small ribosomal subunit protein uS3 (236 aa).

The KH type-2 domain occupies 39 to 107 (IRKFLKKELY…EISINIKEVK (69 aa)). Over residues 213 to 229 (QPEKKEEAPARDKEGRG) the composition is skewed to basic and acidic residues. The interval 213-236 (QPEKKEEAPARDKEGRGTRRRGRQ) is disordered.

Belongs to the universal ribosomal protein uS3 family. In terms of assembly, part of the 30S ribosomal subunit. Forms a tight complex with proteins S10 and S14.

Functionally, binds the lower part of the 30S subunit head. Binds mRNA in the 70S ribosome, positioning it for translation. In Wolinella succinogenes (strain ATCC 29543 / DSM 1740 / CCUG 13145 / JCM 31913 / LMG 7466 / NCTC 11488 / FDC 602W) (Vibrio succinogenes), this protein is Small ribosomal subunit protein uS3.